The following is a 173-amino-acid chain: Large ribosomal subunit protein uL5 (173 aa).

The protein belongs to the universal ribosomal protein uL5 family. As to quaternary structure, component of the large ribosomal subunit.

The protein resides in the nucleus. Its subcellular location is the cytoplasm. Component of the ribosome, a large ribonucleoprotein complex responsible for the synthesis of proteins in the cell. The small ribosomal subunit (SSU) binds messenger RNAs (mRNAs) and translates the encoded message by selecting cognate aminoacyl-transfer RNA (tRNA) molecules. The large subunit (LSU) contains the ribosomal catalytic site termed the peptidyl transferase center (PTC), which catalyzes the formation of peptide bonds, thereby polymerizing the amino acids delivered by tRNAs into a polypeptide chain. The nascent polypeptides leave the ribosome through a tunnel in the LSU and interact with protein factors that function in enzymatic processing, targeting, and the membrane insertion of nascent chains at the exit of the ribosomal tunnel. This chain is Large ribosomal subunit protein uL5 (RPL11), found in Encephalitozoon cuniculi (strain GB-M1) (Microsporidian parasite).